An 82-amino-acid polypeptide reads, in one-letter code: UPF0213 protein SERP0126 (82 aa).

Residues 2–77 form the GIY-YIG domain; sequence DKHFVYIVKC…KTYTRQQKLK (76 aa).

The protein belongs to the UPF0213 family.

In Staphylococcus epidermidis (strain ATCC 35984 / DSM 28319 / BCRC 17069 / CCUG 31568 / BM 3577 / RP62A), this protein is UPF0213 protein SERP0126.